The primary structure comprises 71 residues: Omega-conotoxin SO-3 (71 aa).

Positions 1–22 (MKLTCMVIVAVLLLTACQLITA) are cleaved as a signal peptide. A propeptide spanning residues 23-45 (DDSRGTQKHRTLRSKTKLSMSTR) is cleaved from the precursor. 3 disulfide bridges follow: Cys-46–Cys-61, Cys-53–Cys-65, and Cys-60–Cys-70. Residue Cys-70 is modified to Cysteine amide.

It belongs to the conotoxin O1 superfamily. As to expression, expressed by the venom duct.

Its subcellular location is the secreted. In terms of biological role, omega-conotoxins act at presynaptic membranes, they bind and block voltage-gated calcium channels (Cav). This peptide selectively targets Cav2.2/CACNA1B (IC(50)=160 nM) voltage-gated calcium channels. When tested in mammals, this toxin displays an analgesic potency similar to MVIIA in a range of acute and chronic pain models in rodents, but has less adverse effects (tremor, diminution of spontaneous locomotor activity and bad coordinated locomotion) compared with identical dosages of MVIIA injected intrathecally. In Conus striatus (Striated cone), this protein is Omega-conotoxin SO-3.